A 240-amino-acid polypeptide reads, in one-letter code: Glutathione S-transferase omega-1 (240 aa).

Position 2 is an N-acetylserine (Ser2). Residues 22 to 101 (GQIRVYSMRF…YLDEAYPEKK (80 aa)) form the GST N-terminal domain. Residue Cys32 is the Nucleophile of the active site. N6-acetyllysine is present on Lys57. Glutathione contacts are provided by residues Lys59, Val72, and 85-86 (ES). One can recognise a GST C-terminal domain in the interval 106-227 (DPYKKARQKM…AKTYREYLNL (122 aa)). Ser129 bears the Phosphoserine mark. Lys152 bears the N6-acetyllysine mark.

It belongs to the GST superfamily. Omega family. As to quaternary structure, homodimer.

Its subcellular location is the cytoplasm. It is found in the cytosol. It carries out the reaction RX + glutathione = an S-substituted glutathione + a halide anion + H(+). The enzyme catalyses L-dehydroascorbate + 2 glutathione = glutathione disulfide + L-ascorbate. The catalysed reaction is methylarsonate + 2 glutathione + H(+) = methylarsonous acid + glutathione disulfide + H2O. Functionally, exhibits glutathione-dependent thiol transferase and dehydroascorbate reductase activities. Has S-(phenacyl)glutathione reductase activity. Also has glutathione S-transferase activity. Participates in the biotransformation of inorganic arsenic and reduces monomethylarsonic acid (MMA) and dimethylarsonic acid. This is Glutathione S-transferase omega-1 (Gsto1) from Mus musculus (Mouse).